Consider the following 369-residue polypeptide: Putative agmatine deiminase 2 (369 aa).

The Amidino-cysteine intermediate role is filled by cysteine 356.

The protein belongs to the agmatine deiminase family.

The enzyme catalyses agmatine + H2O = N-carbamoylputrescine + NH4(+). This Listeria monocytogenes serovar 1/2a (strain ATCC BAA-679 / EGD-e) protein is Putative agmatine deiminase 2.